A 116-amino-acid chain; its full sequence is Protein Rev (116 aa).

Residues Ser5 and Ser8 each carry the phosphoserine; by host CK2 modification. A homomultimerization region spans residues Leu18–Asn26. The disordered stretch occupies residues Tyr23–Arg48. Residues Thr34 to Arg50 carry the Nuclear localization signal and RNA-binding (RRE) motif. Residues Gln36 to Glu47 are compositionally biased toward basic residues. Residues Phe73–Asp84 carry the Nuclear export signal and binding to XPO1 motif. Residues Gly90 to Glu116 are disordered. Ser92 and Ser99 each carry phosphoserine; by host.

It belongs to the HIV-1 REV protein family. Homomultimer; when bound to the RRE. Multimeric assembly is essential for activity and may involve XPO1. Binds to human KPNB1, XPO1, TNPO1, RANBP5 and IPO7. Interacts with the viral Integrase. Interacts with human KHDRBS1. Interacts with human NAP1; this interaction decreases Rev multimerization and stimulates its activity. Interacts with human DEAD-box helicases DDX3 and DDX24; these interactions may serve for viral RNA export to the cytoplasm and packaging, respectively. Interacts with human PSIP1; this interaction may inhibit HIV-1 DNA integration by promoting dissociation of the Integrase-LEDGF/p75 complex. Post-translationally, asymmetrically arginine dimethylated at one site by host PRMT6. Methylation impairs the RNA-binding activity and export of viral RNA from the nucleus to the cytoplasm. In terms of processing, phosphorylated by protein kinase CK2. Presence of, and maybe binding to the N-terminus of the regulatory beta subunit of CK2 is necessary for CK2-mediated Rev's phosphorylation.

The protein localises to the host nucleus. The protein resides in the host nucleolus. It localises to the host cytoplasm. Escorts unspliced or incompletely spliced viral pre-mRNAs (late transcripts) out of the nucleus of infected cells. These pre-mRNAs carry a recognition sequence called Rev responsive element (RRE) located in the env gene, that is not present in fully spliced viral mRNAs (early transcripts). This function is essential since most viral proteins are translated from unspliced or partially spliced pre-mRNAs which cannot exit the nucleus by the pathway used by fully processed cellular mRNAs. Rev itself is translated from a fully spliced mRNA that readily exits the nucleus. Rev's nuclear localization signal (NLS) binds directly to KPNB1/Importin beta-1 without previous binding to KPNA1/Importin alpha-1. KPNB1 binds to the GDP bound form of RAN (Ran-GDP) and targets Rev to the nucleus. In the nucleus, the conversion from Ran-GDP to Ran-GTP dissociates Rev from KPNB1 and allows Rev's binding to the RRE in viral pre-mRNAs. Rev multimerization on the RRE via cooperative assembly exposes its nuclear export signal (NES) to the surface. Rev can then form a complex with XPO1/CRM1 and Ran-GTP, leading to nuclear export of the complex. Conversion from Ran-GTP to Ran-GDP mediates dissociation of the Rev/RRE/XPO1/RAN complex, so that Rev can return to the nucleus for a subsequent round of export. Beside KPNB1, also seems to interact with TNPO1/Transportin-1, RANBP5/IPO5 and IPO7/RANBP7 for nuclear import. The nucleoporin-like HRB/RIP is an essential cofactor that probably indirectly interacts with Rev to release HIV RNAs from the perinuclear region to the cytoplasm. The protein is Protein Rev of Human immunodeficiency virus type 1 group M subtype B (isolate YU-2) (HIV-1).